A 752-amino-acid polypeptide reads, in one-letter code: Catalase-peroxidase (752 aa).

A disordered region spans residues 1–20; the sequence is MENELVSKVKAPVPGNQTNT. A cross-link (tryptophyl-tyrosyl-methioninium (Trp-Tyr) (with M-260)) is located at residues 111-234; that stretch reads WHSAGTYRIG…LGAVQMGLIY (124 aa). The active-site Proton acceptor is His112. Positions 234 to 260 form a cross-link, tryptophyl-tyrosyl-methioninium (Tyr-Met) (with W-111); it reads YVNPEGPNGKPDPAAAAVDIRETFARM. His275 is a heme b binding site.

This sequence belongs to the peroxidase family. Peroxidase/catalase subfamily. Homodimer or homotetramer. Heme b is required as a cofactor. Post-translationally, formation of the three residue Trp-Tyr-Met cross-link is important for the catalase, but not the peroxidase activity of the enzyme.

It catalyses the reaction H2O2 + AH2 = A + 2 H2O. The catalysed reaction is 2 H2O2 = O2 + 2 H2O. Functionally, bifunctional enzyme with both catalase and broad-spectrum peroxidase activity. The protein is Catalase-peroxidase of Koribacter versatilis (strain Ellin345).